The primary structure comprises 74 residues: NAD(P)H-quinone oxidoreductase subunit O (74 aa).

It belongs to the complex I NdhO subunit family. As to quaternary structure, NDH-1 can be composed of about 15 different subunits; different subcomplexes with different compositions have been identified which probably have different functions.

Its subcellular location is the cellular thylakoid membrane. The catalysed reaction is a plastoquinone + NADH + (n+1) H(+)(in) = a plastoquinol + NAD(+) + n H(+)(out). It catalyses the reaction a plastoquinone + NADPH + (n+1) H(+)(in) = a plastoquinol + NADP(+) + n H(+)(out). Its function is as follows. NDH-1 shuttles electrons from an unknown electron donor, via FMN and iron-sulfur (Fe-S) centers, to quinones in the respiratory and/or the photosynthetic chain. The immediate electron acceptor for the enzyme in this species is believed to be plastoquinone. Couples the redox reaction to proton translocation, and thus conserves the redox energy in a proton gradient. Cyanobacterial NDH-1 also plays a role in inorganic carbon-concentration. The sequence is that of NAD(P)H-quinone oxidoreductase subunit O from Synechococcus sp. (strain RCC307).